We begin with the raw amino-acid sequence, 536 residues long: Nuclear hormone receptor family member nhr-7 (536 aa).

The segment at residues 6-82 (NRICAVCGDT…VGMNPDYVRP (77 aa)) is a DNA-binding region (nuclear receptor). 2 NR C4-type zinc fingers span residues 9–29 (CAVCGDTPAKIHYGVLACFGC) and 46–70 (CRFEKNCEVTKFERNACRYCRFRKC). The NR LBD domain occupies 155 to 378 (ADRSLARKTG…PFHKILTDII (224 aa)). Positions 427–465 (SPCQISAPPPPQQQYTDYSQMPSTSSYPANSSPFQSPYR) are disordered. The span at 439–465 (QQYTDYSQMPSTSSYPANSSPFQSPYR) shows a compositional bias: polar residues.

This sequence belongs to the nuclear hormone receptor family.

It is found in the nucleus. Its function is as follows. Orphan nuclear receptor. The polypeptide is Nuclear hormone receptor family member nhr-7 (nhr-7) (Caenorhabditis elegans).